A 227-amino-acid chain; its full sequence is MICOS complex subunit MIC19 (227 aa).

The N-myristoyl glycine moiety is linked to residue glycine 2. Phosphoserine is present on serine 29. Positions 34–60 (DRMKETSPSGPKSQRYSGTYGASVSDE) are disordered. Over residues 39–55 (TSPSGPKSQRYSGTYGA) the composition is skewed to polar residues. The residue at position 49 (tyrosine 49) is a Phosphotyrosine. A phosphoserine mark is found at serine 50, serine 56, and serine 58. Lysine 142 bears the N6-acetyllysine mark. The CHCH domain occupies 180-222 (HPVCADLQAQILQCYRQNTQQTLSCSALASQYMRCVNQAKQST). 2 short sequence motifs (cx9C motif) span residues 183–193 (CADLQAQILQC) and 204–214 (CSALASQYMRC). 2 cysteine pairs are disulfide-bonded: cysteine 183-cysteine 214 and cysteine 193-cysteine 204.

Belongs to the MICOS complex subunit Mic19 family. Metazoan Mic19 subfamily. As to quaternary structure, component of the mitochondrial contact site and cristae organizing system (MICOS) complex, composed of at least MICOS10/MIC10, CHCHD3/MIC19, CHCHD6/MIC25, APOOL/MIC27, IMMT/MIC60, APOO/MIC23/MIC26 and MICOS13/MIC13. This complex was also known under the names MINOS or MitOS complex. The MICOS complex associates with mitochondrial outer membrane proteins SAMM50, MTX1 and MTX2 (together described as components of the mitochondrial outer membrane sorting assembly machinery (SAM) complex) and DNAJC11, mitochondrial inner membrane protein TMEM11 and with HSPA9. The MICOS and SAM complexes together with DNAJC11 are part of a large protein complex spanning both membranes termed the mitochondrial intermembrane space bridging (MIB) complex. Interacts with HSPA1A/HSPA1B and OPA1, preferentially with the soluble OPA1 form. Interacts with IMMT/MIC60.

Its subcellular location is the mitochondrion inner membrane. It localises to the cytoplasm. The protein localises to the nucleus. It is found in the mitochondrion. Component of the MICOS complex, a large protein complex of the mitochondrial inner membrane that plays crucial roles in the maintenance of crista junctions, inner membrane architecture, and formation of contact sites to the outer membrane. Has also been shown to function as a transcription factor which binds to the BAG1 promoter and represses BAG1 transcription. Plays an important role in the maintenance of the MICOS complex stability and the mitochondrial cristae morphology. The chain is MICOS complex subunit MIC19 (CHCHD3) from Bos taurus (Bovine).